Here is a 263-residue protein sequence, read N- to C-terminus: L-histidine 2-aminobutanoyltransferase (263 aa).

The protein belongs to the methyltransferase superfamily. CntL family. In terms of assembly, interacts with CntM.

The enzyme catalyses L-histidine + S-adenosyl-L-methionine = (2S)-2-amino-4-{[(1S)-1-carboxy-2-(1H-imidazol-4-yl)ethyl]amino}butanoate + S-methyl-5'-thioadenosine + H(+). In terms of biological role, catalyzes the nucleophilic attack of one alpha-aminobutanoate moiety from SAM onto L-histidine to produce the intermediate (2S)-2-amino-4-{[(1S)-1-carboxy-2-(1H-imidazol-4-yl)ethyl]amino}butanoate. Functions in the biosynthesis of the metallophore pseudopaline, which is involved in the acquisition of nickel and zinc, and thus enables bacterial growth inside the host, where metal access is limited. Therefore, this enzyme probably contributes to Pseudomonas virulence. Cannot use D-histidine in place of L-histidine as substrate. In Pseudomonas aeruginosa (strain UCBPP-PA14), this protein is L-histidine 2-aminobutanoyltransferase.